Consider the following 228-residue polypeptide: uncharacterized protein (228 aa).

This sequence to E.coli YbfG.

This is an uncharacterized protein from Haemophilus influenzae (strain ATCC 51907 / DSM 11121 / KW20 / Rd).